The following is a 145-amino-acid chain: Small ribosomal subunit protein uS19 (145 aa).

Ala-2 is modified (N-acetylalanine). Lys-108 is covalently cross-linked (Glycyl lysine isopeptide (Lys-Gly) (interchain with G-Cter in SUMO2)).

It belongs to the universal ribosomal protein uS19 family. As to quaternary structure, component of the small ribosomal subunit.

The protein resides in the cytoplasm. Its function is as follows. Component of the small ribosomal subunit. The ribosome is a large ribonucleoprotein complex responsible for the synthesis of proteins in the cell. The polypeptide is Small ribosomal subunit protein uS19 (RPS15) (Mesocricetus auratus (Golden hamster)).